A 396-amino-acid chain; its full sequence is S-adenosylmethionine synthase 1 (396 aa).

Mg(2+) is bound at residue Glu-12. Residue His-18 coordinates ATP. Glu-46 contacts K(+). Positions 59 and 102 each coordinate L-methionine. Residues 170 to 172, 238 to 241, Asp-249, 255 to 256, Ala-272, Lys-276, and Lys-280 contribute to the ATP site; these read DGK, SGRF, and RK. Residue Asp-249 coordinates L-methionine. Residue Lys-280 coordinates L-methionine.

Belongs to the AdoMet synthase family. In terms of assembly, homotetramer. Requires Mn(2+) as cofactor. Mg(2+) serves as cofactor. The cofactor is Co(2+). K(+) is required as a cofactor.

The protein localises to the cytoplasm. It carries out the reaction L-methionine + ATP + H2O = S-adenosyl-L-methionine + phosphate + diphosphate. Its pathway is amino-acid biosynthesis; S-adenosyl-L-methionine biosynthesis; S-adenosyl-L-methionine from L-methionine: step 1/1. Functionally, catalyzes the formation of S-adenosylmethionine from methionine and ATP. The reaction comprises two steps that are both catalyzed by the same enzyme: formation of S-adenosylmethionine (AdoMet) and triphosphate, and subsequent hydrolysis of the triphosphate. The polypeptide is S-adenosylmethionine synthase 1 (SAM1) (Oryza sativa subsp. japonica (Rice)).